Here is a 422-residue protein sequence, read N- to C-terminus: Histidine--tRNA ligase (422 aa).

This sequence belongs to the class-II aminoacyl-tRNA synthetase family. In terms of assembly, homodimer.

It localises to the cytoplasm. The enzyme catalyses tRNA(His) + L-histidine + ATP = L-histidyl-tRNA(His) + AMP + diphosphate + H(+). This is Histidine--tRNA ligase from Aliivibrio fischeri (strain ATCC 700601 / ES114) (Vibrio fischeri).